The sequence spans 190 residues: MVRVSTSEFRVGLRVEIDGQPYVILQNDFVKPGKGQAFNRIKVKNFLTGRVIEKTFKSGESIETADVREQQMRLLYTDQEGATFMDDETFEQELIFWDKLENIRQWLLEDTVYTLVRYNGDVISVEPPIFMELSIAETAPGVRGDTASGRVLKPATTNTGAKIMVPIFIEEGEVVKVDTRTGSYESRVSK.

Belongs to the elongation factor P family.

Its subcellular location is the cytoplasm. It functions in the pathway protein biosynthesis; polypeptide chain elongation. Functionally, involved in peptide bond synthesis. Stimulates efficient translation and peptide-bond synthesis on native or reconstituted 70S ribosomes in vitro. Probably functions indirectly by altering the affinity of the ribosome for aminoacyl-tRNA, thus increasing their reactivity as acceptors for peptidyl transferase. The sequence is that of Elongation factor P 2 (efp2) from Chlamydia muridarum (strain MoPn / Nigg).